We begin with the raw amino-acid sequence, 198 residues long: Glycerol-3-phosphate acyltransferase 2 (198 aa).

The next 4 helical transmembrane spans lie at 4 to 24 (TYLLFIVAYLLGSIPFALVVG), 71 to 91 (LPMVFGLDIHPLWFGLAAVLG), 113 to 133 (LLCYSPVVFAILAVVFFTLLF), and 147 to 167 (VVAVIASIVSGDKIFIIAMCL).

The protein belongs to the PlsY family. As to quaternary structure, probably interacts with PlsX.

The protein resides in the cell membrane. The catalysed reaction is an acyl phosphate + sn-glycerol 3-phosphate = a 1-acyl-sn-glycero-3-phosphate + phosphate. Its pathway is lipid metabolism; phospholipid metabolism. In terms of biological role, catalyzes the transfer of an acyl group from acyl-phosphate (acyl-PO(4)) to glycerol-3-phosphate (G3P) to form lysophosphatidic acid (LPA). This enzyme utilizes acyl-phosphate as fatty acyl donor, but not acyl-CoA or acyl-ACP. The polypeptide is Glycerol-3-phosphate acyltransferase 2 (Bacillus cereus (strain ZK / E33L)).